The following is an 842-amino-acid chain: Leucine--tRNA ligase (842 aa).

The 'HIGH' region signature appears at Pro-44–His-55. The 'KMSKS' region signature appears at Lys-619–Ser-623. Lys-622 is an ATP binding site.

This sequence belongs to the class-I aminoacyl-tRNA synthetase family.

Its subcellular location is the cytoplasm. It carries out the reaction tRNA(Leu) + L-leucine + ATP = L-leucyl-tRNA(Leu) + AMP + diphosphate. The protein is Leucine--tRNA ligase of Borrelia turicatae (strain 91E135).